We begin with the raw amino-acid sequence, 321 residues long: Cytochrome c biogenesis protein CcsA (321 aa).

8 helical membrane passes run 9 to 29 (ILTH…LMTL), 44 to 64 (GIIS…IYSG), 71 to 91 (LYES…IPYL), 98 to 118 (LSVI…SCLS), 143 to 163 (MLLS…LLVI), 225 to 245 (IISL…VWAN), 260 to 280 (WAFI…NINF), and 288 to 308 (VASI…LLGI).

This sequence belongs to the CcmF/CycK/Ccl1/NrfE/CcsA family. In terms of assembly, may interact with Ccs1.

Its subcellular location is the plastid. It is found in the chloroplast thylakoid membrane. Functionally, required during biogenesis of c-type cytochromes (cytochrome c6 and cytochrome f) at the step of heme attachment. The protein is Cytochrome c biogenesis protein CcsA of Dioscorea elephantipes (Elephant's foot yam).